Consider the following 98-residue polypeptide: Putative pterin-4-alpha-carbinolamine dehydratase (98 aa).

Belongs to the pterin-4-alpha-carbinolamine dehydratase family.

The catalysed reaction is (4aS,6R)-4a-hydroxy-L-erythro-5,6,7,8-tetrahydrobiopterin = (6R)-L-erythro-6,7-dihydrobiopterin + H2O. This Mesorhizobium japonicum (strain LMG 29417 / CECT 9101 / MAFF 303099) (Mesorhizobium loti (strain MAFF 303099)) protein is Putative pterin-4-alpha-carbinolamine dehydratase.